A 339-amino-acid polypeptide reads, in one-letter code: 1-aminocyclopropane-1-carboxylate deaminase (339 aa).

Lys52 is modified (N6-(pyridoxal phosphate)lysine). The active-site Nucleophile is the Ser79.

It belongs to the ACC deaminase/D-cysteine desulfhydrase family. Homotrimer. Pyridoxal 5'-phosphate serves as cofactor.

It catalyses the reaction 1-aminocyclopropane-1-carboxylate + H2O = 2-oxobutanoate + NH4(+). Its function is as follows. Catalyzes a cyclopropane ring-opening reaction, the irreversible conversion of 1-aminocyclopropane-1-carboxylate (ACC) to ammonia and alpha-ketobutyrate. Allows growth on ACC as a nitrogen source. This chain is 1-aminocyclopropane-1-carboxylate deaminase, found in Bradyrhizobium sp. (strain BTAi1 / ATCC BAA-1182).